We begin with the raw amino-acid sequence, 359 residues long: tRNA N6-adenosine threonylcarbamoyltransferase (359 aa).

Residues His-121 and His-125 each contribute to the Fe cation site. Substrate contacts are provided by residues 143–147 (LVSGG), Asp-176, Gly-189, and Asn-286. Position 311 (Asp-311) interacts with Fe cation.

It belongs to the KAE1 / TsaD family. It depends on Fe(2+) as a cofactor.

The protein localises to the cytoplasm. The enzyme catalyses L-threonylcarbamoyladenylate + adenosine(37) in tRNA = N(6)-L-threonylcarbamoyladenosine(37) in tRNA + AMP + H(+). In terms of biological role, required for the formation of a threonylcarbamoyl group on adenosine at position 37 (t(6)A37) in tRNAs that read codons beginning with adenine. Is involved in the transfer of the threonylcarbamoyl moiety of threonylcarbamoyl-AMP (TC-AMP) to the N6 group of A37, together with TsaE and TsaB. TsaD likely plays a direct catalytic role in this reaction. This Jannaschia sp. (strain CCS1) protein is tRNA N6-adenosine threonylcarbamoyltransferase.